The chain runs to 382 residues: 2-epi-valiolone synthase (382 aa).

NAD(+)-binding positions include 92–95 (EKSK), 124–128 (GVVVD), 148–149 (TT), K161, K170, and 188–191 (HLRT). 3 residues coordinate Zn(2+): E203, H266, and H283.

Belongs to the sugar phosphate cyclases superfamily. EVS family. The cofactor is NAD(+). Co(2+) serves as cofactor. It depends on Zn(2+) as a cofactor.

The catalysed reaction is D-sedoheptulose 7-phosphate = 2-epi-valiolone + phosphate. Functionally, catalyzes the conversion of sedoheptulose 7-phosphate to 2-epi-valiolone, which may serve as an alternative precursor for aminocyclitol biosynthesis. This is 2-epi-valiolone synthase from Actinosynnema mirum (strain ATCC 29888 / DSM 43827 / JCM 3225 / NBRC 14064 / NCIMB 13271 / NRRL B-12336 / IMRU 3971 / 101).